A 148-amino-acid chain; its full sequence is Putative nickel-responsive regulator (148 aa).

Ni(2+)-binding residues include His-88, His-99, His-101, and Cys-107.

This sequence belongs to the transcriptional regulatory CopG/NikR family. Ni(2+) serves as cofactor.

Its function is as follows. Transcriptional regulator. The sequence is that of Putative nickel-responsive regulator from Helicobacter pylori (strain Shi470).